The chain runs to 266 residues: MWWFQQGLSFLPSALVIWTAAAFIFSYITAITLHHVDPVLPYISDTGTVAPEKCLFGAMLNIAAVLCVATIYVRYKQVHALNPEENRIIRLNKAGLVLGLLSCLGLSLVANFQKTTFFAVHVCGAVLTFGMGSLYMFVQTILSYQMQPKIHGKQVFWIRLLLVIWCGVSAFSMLTCSSLLYNGSFGADIVQKLHWNPEDKGYVLHMITTAAEWSMSLSFFGFFLTYIRDFQKISLRVEATLHGLTLYDTAPCPVNNERTWLLSRDV.

The next 6 helical transmembrane spans lie at 8-28 (LSFL…FSYI), 53-73 (KCLF…TIYV), 92-112 (NKAG…VANF), 117-137 (FFAV…LYMF), 160-180 (LLLV…SSLL), and 207-227 (ITTA…LTYI).

The protein belongs to the DRAM/TMEM150 family.

The protein localises to the lysosome membrane. Its subcellular location is the photoreceptor inner segment. It localises to the apical cell membrane. Functionally, plays a role in the initiation of autophagy. In the retina, might be involved in the process of photoreceptor cells renewal and recycling to preserve visual function. Induces apoptotic cell death when coexpressed with DRAM1. The sequence is that of DNA damage-regulated autophagy modulator protein 2 (DRAM2) from Bos taurus (Bovine).